The primary structure comprises 398 residues: Succinate--CoA ligase [ADP-forming] subunit beta (398 aa).

The 246-residue stretch at 9–254 folds into the ATP-grasp domain; it reads KAVLREFGVP…ESEEDAKEIE (246 aa). Residues Lys46, 53–55, Glu109, Ser112, and Glu117 each bind ATP; that span reads GRG. Mg(2+)-binding residues include Asn209 and Asp223. Residues Asn274 and 331–333 each bind substrate; that span reads GIM.

Belongs to the succinate/malate CoA ligase beta subunit family. As to quaternary structure, heterotetramer of two alpha and two beta subunits. Mg(2+) is required as a cofactor.

The enzyme catalyses succinate + ATP + CoA = succinyl-CoA + ADP + phosphate. The catalysed reaction is GTP + succinate + CoA = succinyl-CoA + GDP + phosphate. The protein operates within carbohydrate metabolism; tricarboxylic acid cycle; succinate from succinyl-CoA (ligase route): step 1/1. Succinyl-CoA synthetase functions in the citric acid cycle (TCA), coupling the hydrolysis of succinyl-CoA to the synthesis of either ATP or GTP and thus represents the only step of substrate-level phosphorylation in the TCA. The beta subunit provides nucleotide specificity of the enzyme and binds the substrate succinate, while the binding sites for coenzyme A and phosphate are found in the alpha subunit. This chain is Succinate--CoA ligase [ADP-forming] subunit beta, found in Rhodopseudomonas palustris (strain HaA2).